A 184-amino-acid chain; its full sequence is Gremlin-1 (184 aa).

Residues 1–24 form the signal peptide; it reads MNRTAYTVGALLLLLGTLLPTAEG. The tract at residues 23–77 is disordered; sequence EGKKKGSQGAIPPPDKAQHNDSEQTQSPPQPGSRTRGRGQGRGTAMPGEEVLESS. A glycan (N-linked (GlcNAc...) asparagine) is linked at Asn-42. 4 disulfides stabilise this stretch: Cys-94–Cys-144, Cys-108–Cys-158, Cys-118–Cys-176, and Cys-122–Cys-178. A CTCK domain is found at 94–184; sequence CKTQPLKQTI…QCRCISIDLD (91 aa).

Belongs to the DAN family. Homodimer; can also form homooligomers. Interacts with BMP2; can form higher oligomers with BMP2. Interacts with SLIT1 and SLIT2 in a glycosylation-dependent manner. As to expression, highly expressed in spleen and to a lesser extent in lung, skeletal muscle and kidney. Expressed only in non-transformed cells or primary fibroblasts in culture but not in established transformed or tumor derived cell lines. Broadly expressed in limb bud mesenchyme but restricted to the distal limb bud mesenchyme and concentrated posteriorly. Expressed in ovary especially in granulosa cells of follicles of type 4.

The protein resides in the secreted. Functionally, cytokine that may play an important role during carcinogenesis and metanephric kidney organogenesis, as BMP a antagonist required for early limb outgrowth and patterning in maintaining the FGF4-SHH feedback loop. Down-regulates the BMP4 signaling in a dose-dependent manner. Antagonist of BMP2; inhibits BMP2-mediated differentiation of osteoblasts (in vitro). Acts as inhibitor of monocyte chemotaxis. This is Gremlin-1 (Grem1) from Mus musculus (Mouse).